Reading from the N-terminus, the 197-residue chain is MVERKASVERNTLETQVKCSINLDGSGKARFDIGVPFLEHMLDQIARHGLIDLDIECKGDTHIDDHHTVEDVGITLGMAFAQAIGDKKGIFRYGHAYVPLDEALSRVVIDFSGRPGLQMHVPYTRASVGGFDVDLFQEFFQGFVNHALVTLHIDNLRGHNTHHQIETVFKAFGRALRMAITLDERMAGQMPSTKGCL.

The protein belongs to the imidazoleglycerol-phosphate dehydratase family.

It is found in the cytoplasm. It catalyses the reaction D-erythro-1-(imidazol-4-yl)glycerol 3-phosphate = 3-(imidazol-4-yl)-2-oxopropyl phosphate + H2O. It participates in amino-acid biosynthesis; L-histidine biosynthesis; L-histidine from 5-phospho-alpha-D-ribose 1-diphosphate: step 6/9. This chain is Imidazoleglycerol-phosphate dehydratase, found in Pseudomonas putida (strain ATCC 700007 / DSM 6899 / JCM 31910 / BCRC 17059 / LMG 24140 / F1).